A 265-amino-acid polypeptide reads, in one-letter code: Undecaprenyl-diphosphatase (265 aa).

Helical transmembrane passes span 1-21 (MDIF…FLPI), 39-59 (QGVG…VLYF), 84-104 (ALAW…LALL), 114-134 (ASVI…ADWL), 144-164 (LNWK…VPGT), 187-207 (FSFL…LLEV), 218-238 (GFLI…HFFL), and 244-264 (VGMW…YAVL).

It belongs to the UppP family.

Its subcellular location is the cell inner membrane. The catalysed reaction is di-trans,octa-cis-undecaprenyl diphosphate + H2O = di-trans,octa-cis-undecaprenyl phosphate + phosphate + H(+). Catalyzes the dephosphorylation of undecaprenyl diphosphate (UPP). Confers resistance to bacitracin. The chain is Undecaprenyl-diphosphatase from Marinobacter nauticus (strain ATCC 700491 / DSM 11845 / VT8) (Marinobacter aquaeolei).